Consider the following 257-residue polypeptide: 4-hydroxy-tetrahydrodipicolinate reductase (257 aa).

Residues 11–16 and Glu37 contribute to the NAD(+) site; that span reads GANGRM. Residue Arg38 coordinates NADP(+). Residues 86–88 and 110–113 each bind NAD(+); these read GST and SGNY. The Proton donor/acceptor role is filled by His144. Residue His145 coordinates (S)-2,3,4,5-tetrahydrodipicolinate. The active-site Proton donor is the Lys148. A (S)-2,3,4,5-tetrahydrodipicolinate-binding site is contributed by 154 to 155; that stretch reads GT.

The protein belongs to the DapB family.

Its subcellular location is the cytoplasm. The catalysed reaction is (S)-2,3,4,5-tetrahydrodipicolinate + NAD(+) + H2O = (2S,4S)-4-hydroxy-2,3,4,5-tetrahydrodipicolinate + NADH + H(+). It catalyses the reaction (S)-2,3,4,5-tetrahydrodipicolinate + NADP(+) + H2O = (2S,4S)-4-hydroxy-2,3,4,5-tetrahydrodipicolinate + NADPH + H(+). Its pathway is amino-acid biosynthesis; L-lysine biosynthesis via DAP pathway; (S)-tetrahydrodipicolinate from L-aspartate: step 4/4. Functionally, catalyzes the conversion of 4-hydroxy-tetrahydrodipicolinate (HTPA) to tetrahydrodipicolinate. In Caulobacter vibrioides (strain ATCC 19089 / CIP 103742 / CB 15) (Caulobacter crescentus), this protein is 4-hydroxy-tetrahydrodipicolinate reductase.